Consider the following 269-residue polypeptide: MSDSKYQIALIGGSGRMGRAIITVLSSSSKSTLSSSVVSGGSVFLGMDSGLHSGIKQNGVNFSSDLEAAVRSADCVIDFSTYQNLDFTLKACIQHRKPVVIGTTGLTELQKDALKVASKEIGIVYSPNMSIGVNLLFKLTEIAAKAMGENSDIEIQDIHHRHKKDAPSGTAEKLKSILLETLGRTSKNVIHGRHGILKERDPREIGIHTFRAGEVIGDHTVYFFTPEERIEITHRAQDRKTFAVGSIHAAEFLVGRKPGLYDMFAVLGL.

Residues 12-17 (GGSGRM), 102-104 (GTT), and 126-129 (SPNM) contribute to the NAD(+) site. The Proton donor/acceptor role is filled by His-159. His-160 is a binding site for (S)-2,3,4,5-tetrahydrodipicolinate. The active-site Proton donor is Lys-163. Residue 169 to 170 (GT) coordinates (S)-2,3,4,5-tetrahydrodipicolinate.

Belongs to the DapB family.

The protein localises to the cytoplasm. The catalysed reaction is (S)-2,3,4,5-tetrahydrodipicolinate + NAD(+) + H2O = (2S,4S)-4-hydroxy-2,3,4,5-tetrahydrodipicolinate + NADH + H(+). It catalyses the reaction (S)-2,3,4,5-tetrahydrodipicolinate + NADP(+) + H2O = (2S,4S)-4-hydroxy-2,3,4,5-tetrahydrodipicolinate + NADPH + H(+). It participates in amino-acid biosynthesis; L-lysine biosynthesis via DAP pathway; (S)-tetrahydrodipicolinate from L-aspartate: step 4/4. Functionally, catalyzes the conversion of 4-hydroxy-tetrahydrodipicolinate (HTPA) to tetrahydrodipicolinate. This chain is 4-hydroxy-tetrahydrodipicolinate reductase, found in Leptospira borgpetersenii serovar Hardjo-bovis (strain JB197).